A 413-amino-acid chain; its full sequence is Cyclic AMP-dependent transcription factor ATF-7 (413 aa).

The transactivation domain stretch occupies residues 1 to 285 (MGDDRPFVCS…GMVVGTASTM (285 aa)). Residues 7–31 (FVCSAPGCGQRFTNEDHLAVHKHKH) form a C2H2-type zinc finger. Phosphothreonine; by MAPK11 is present on Thr-51. 2 positions are modified to phosphothreonine: Thr-53 and Thr-101. Disordered regions lie at residues 81 to 140 (ASDD…TTKP) and 299 to 337 (HPDAPSPAQPQVSPAQPTPSTGGRRRRTVDEDPDERRQR). Lys-107 is covalently cross-linked (Glycyl lysine isopeptide (Lys-Gly) (interchain with G-Cter in SUMO1)). Composition is skewed to low complexity over residues 114 to 126 (VDSSPPDSPASSP) and 307 to 320 (QPQVSPAQPTPSTG). Basic and acidic residues predominate over residues 326–337 (TVDEDPDERRQR). Residues 332-395 (DERRQRFLER…AQLKQLLLAH (64 aa)) form the bZIP domain. Positions 334 to 354 (RRQRFLERNRAAASRCRQKRK) are basic motif. A leucine-zipper region spans residues 360 to 388 (LEKKAEELTSQNIQLSNEVTLLRNEVAQL).

This sequence belongs to the bZIP family. Homodimer; binds DNA as homodimer. Heterodimer; heterodimerizes with other members of ATF family and with JUN family members. Interacts with JNK2; the interaction does not phosphorylate ATF7 but acts as a docking site for other ATF-associated partners such as JUN family members. Interacts (via its transactivation domain) with TAF12 the interaction potentiates the transactivation activity and is inhibited by ATF7 sumoylation. Interacts with TAF4; the interaction inhibits the TAF12-dependent transactivation. Interacts with MAPK9; the interaction does not phosphorylate ATF7 but acts as a docking site for ATF7-associated partners such as JUN. Interacts with Ku complex components XRCC6 and XRCC7. Interacts with TERT. Post-translationally, on EGF stimulation, phosphorylated first on Thr-53 allowing subsequent phosphorylation on Thr-51. This latter phosphorylation prevents sumoylation, increases binding to TAF12 and enhances transcriptional activity. Social isolation stress as well as TNF-alpha also induce the phosphorylation of ATF7. Phosphorylated in proliferating colonic and small intestinal epithelial cells. In terms of processing, sumoylation delays nuclear localization and inhibits transactivation activity through preventing binding to TAF12. RANBP2 appears to be the specific E3 ligase.

It localises to the nucleus. It is found in the nucleoplasm. The protein localises to the chromosome. The protein resides in the telomere. In terms of biological role, stress-responsive chromatin regulator that plays a role in various biological processes including innate immunological memory, adipocyte differentiation or telomerase regulation. In absence of stress, contributes to the formation of heterochromatin and heterochromatin-like structure by recruiting histone H3K9 tri- and di-methyltransferases thus silencing the transcription of target genes such as Htr5b, STAT1 in adipocytes, or genes involved in innate immunity in macrophages and adipocytes. Phosphorylation of ATF7 disrupts interactions with histone methyltransferase and enhances the association with coactivators containing histone acetyltransferase and/or histone demethylase, leading to disruption of the heterochromatin-like structure and subsequently transcriptional activation. In response to TNF-alpha, which is induced by various stresses, phosphorylated ATF7 and telomerase are released from telomeres leading to telomere shortening. Also plays a role in maintaining epithelial regenerative capacity and protecting against cell death during intestinal epithelial damage and repair. This Mus musculus (Mouse) protein is Cyclic AMP-dependent transcription factor ATF-7 (Atf7).